The primary structure comprises 181 residues: Isopentenyl-diphosphate Delta-isomerase (181 aa).

Mn(2+)-binding residues include histidine 25 and histidine 32. A Nudix hydrolase domain is found at 30–164 (PLHLAFSCWL…PWAFSPWMVM (135 aa)). The active site involves cysteine 67. Cysteine 67 serves as a coordination point for Mg(2+). Histidine 69 lines the Mn(2+) pocket. Glutamate 87 contacts Mg(2+). Mn(2+)-binding residues include glutamate 114 and glutamate 116. The active site involves glutamate 116.

Belongs to the IPP isomerase type 1 family. In terms of assembly, homodimer. Mg(2+) serves as cofactor. It depends on Mn(2+) as a cofactor.

It is found in the cytoplasm. The enzyme catalyses isopentenyl diphosphate = dimethylallyl diphosphate. Its pathway is isoprenoid biosynthesis; dimethylallyl diphosphate biosynthesis; dimethylallyl diphosphate from isopentenyl diphosphate: step 1/1. Catalyzes the 1,3-allylic rearrangement of the homoallylic substrate isopentenyl (IPP) to its highly electrophilic allylic isomer, dimethylallyl diphosphate (DMAPP). The polypeptide is Isopentenyl-diphosphate Delta-isomerase (Salmonella typhi).